The chain runs to 455 residues: Phosphoglucosamine mutase (455 aa).

Residue Ser104 is the Phosphoserine intermediate of the active site. Mg(2+)-binding residues include Ser104, Asp243, Asp245, and Asp247. Ser104 carries the post-translational modification Phosphoserine.

The protein belongs to the phosphohexose mutase family. Requires Mg(2+) as cofactor. Activated by phosphorylation.

It catalyses the reaction alpha-D-glucosamine 1-phosphate = D-glucosamine 6-phosphate. In terms of biological role, catalyzes the conversion of glucosamine-6-phosphate to glucosamine-1-phosphate. This is Phosphoglucosamine mutase from Synechococcus sp. (strain CC9311).